The sequence spans 516 residues: GMP synthase [glutamine-hydrolyzing] (516 aa).

The Glutamine amidotransferase type-1 domain maps to 5 to 199; the sequence is SIIVLDFGSQ…ARNICGVTEK (195 aa). Catalysis depends on cysteine 82, which acts as the Nucleophile. Active-site residues include histidine 173 and glutamate 175. The region spanning 200–391 is the GMPS ATP-PPase domain; it reads WKMEHFLKEQ…LGLPESMINR (192 aa). 227–233 is an ATP binding site; the sequence is SGGVDSS.

In terms of assembly, homodimer.

The catalysed reaction is XMP + L-glutamine + ATP + H2O = GMP + L-glutamate + AMP + diphosphate + 2 H(+). Its pathway is purine metabolism; GMP biosynthesis; GMP from XMP (L-Gln route): step 1/1. Functionally, catalyzes the synthesis of GMP from XMP. This chain is GMP synthase [glutamine-hydrolyzing], found in Sulfurimonas denitrificans (strain ATCC 33889 / DSM 1251) (Thiomicrospira denitrificans (strain ATCC 33889 / DSM 1251)).